The sequence spans 455 residues: L-serine dehydratase (455 aa).

The protein belongs to the iron-sulfur dependent L-serine dehydratase family. The cofactor is [4Fe-4S] cluster.

It carries out the reaction L-serine = pyruvate + NH4(+). Its pathway is carbohydrate biosynthesis; gluconeogenesis. This Helicobacter pylori (strain J99 / ATCC 700824) (Campylobacter pylori J99) protein is L-serine dehydratase (sdaA).